Reading from the N-terminus, the 1343-residue chain is MSGQQKTSELVFFVNGKKVTDTNPDPECTLLTYLRDKLRLCGTKLGCAEGGCGACTVVISRMDRGQNKIRHLAVNACLTPVCAMHGCAVTTVEGIGSTRTRLHPVQERLAKAHGSQCGFCTPGIVMSMYALLRSAEQPSMRDLEVAFQGNLCRCTGYRPILEGYKTFTKEFACGMGDKCCKVNGKGCGGGDDTQSVTDDTLFERSQFQPLDPSQEPIFPPELQLTPTYDSESLIFSSERVTWYRPTTLQELLQLKSDHPSAKLVVGNTEVGVEVKFKHFLYPHLINPTQVPELLEVRESEESIYFGAAVSLMEIDALLRQRIEELPEAQTRLFQCAVDMLHYFAGKQIRNVACLGGNIMTGSPISDMNPVLTAAGARLEVASLVGGKTSHRTVHMGTGFFTGYRRNVIEPHEVLLGIHFQKTTPDQHVVAFKQARRRDDDIAIVNAAVNVRFEPRTNVVAGISMAFGGMAPTTVLAPRTSQLMVKQPLDHHLVERVAESLCGELPLAASAPGGMIAYRRALVVSLIFKAYLSISRKLSEAGIISTDAIPAEERSGAELFHTPVLRSAQLFERVCSEQPVCDPIGRPEVHAAALKQATGEAIYTDDIPRMDGELYLGLVLSTKPRAKITKLDASEALALEGVHAFFSHKDLTEHENEVGPVFHDEHVFAAAEVHCYGQIVGAVAADNKALAQRAARLVRVEYEELAPVIVTIEQAIEHGSYFPDYPRYVNKGNVEEAFAAAEHTYEGSCRMGGQEHFYLETHAAVAVPRDSDELELFCSTQHPSEVQKLVAHVTTLPAHRVVCRAKRLGGGFGGKESRGISVALPVALAAYRLRRPVRCMLDRDEDMLITGTRHPFLFKYKVAFASDGLITACDIECYNNAGWSMDLSFSVLERAMYHFENCYRIPNVRVGGWVCKTNLPSNTAFRGFGGPQGMFAGEHIIRDVARIVGRDVLDVMRLNFYKTGDITHYNQKLEHFPIERCLDDCLAQSRYHEKRTEIAKFNRENRWRKRGMAVIPTKYGIAFGVMHLNQAGALINVYGDGSVLLSHGGVEIGQGLNTKMIQCAARALGIPIELIHISETATDKVPNTSPTAASVGSDLNGMAVLDACEKLNKRLAPIKEALPQGTWQEWINKAYFDRVSLSATGFYAMPGIGYHPETNPNARTYSYYTNGVGISVVEIDCLTGDHQVLSTDIVMDIGSSINPAIDIGQIEGAFMQGYGLFTLEELMYSPQGMLYSRGPGMYKLPGFADIPGEFNVSLLTGAPNPRAVYSSKAVGEPPLFIGSSAFFAIKEAIAAARQEQGLTGDFPLEAPSTSARIRMACQDKFTNLLEIPEEGSFTPWNIVP.

Positions 8 to 95 (SELVFFVNGK…GCAVTTVEGI (88 aa)) constitute a 2Fe-2S ferredoxin-type domain. Cys-47, Cys-52, Cys-55, Cys-77, Cys-117, Cys-120, Cys-152, and Cys-154 together coordinate [2Fe-2S] cluster. Positions 235-424 (FSSERVTWYR…LGIHFQKTTP (190 aa)) constitute an FAD-binding PCMH-type domain. Residues 263-270 (LVVGNTEV), Phe-343, 353-357 (CLGGN), Asp-366, Leu-414, and Lys-432 each bind FAD. 2 residues coordinate Mo-molybdopterin: Gln-780 and Phe-811. Glu-815 and Arg-893 together coordinate substrate. A Mo-molybdopterin-binding site is contributed by Arg-925. Phe-927 contributes to the substrate binding site. Ala-1092 provides a ligand contact to Mo-molybdopterin. The Proton acceptor role is filled by Glu-1275.

The protein belongs to the xanthine dehydrogenase family. Homodimer. FAD is required as a cofactor. Mo-molybdopterin serves as cofactor. The cofactor is [2Fe-2S] cluster.

Its subcellular location is the peroxisome. It catalyses the reaction xanthine + NAD(+) + H2O = urate + NADH + H(+). The enzyme catalyses hypoxanthine + NAD(+) + H2O = xanthine + NADH + H(+). Its function is as follows. Key enzyme in purine degradation. Catalyzes the oxidation of hypoxanthine to xanthine. Catalyzes the oxidation of xanthine to uric acid. The chain is Xanthine dehydrogenase (ry) from Drosophila pseudoobscura pseudoobscura (Fruit fly).